A 407-amino-acid chain; its full sequence is Venom metalloproteinase 3 (407 aa).

N-linked (GlcNAc...) asparagine glycosylation is found at Asn42, Asn91, Asn126, and Asn166. Positions 191–405 (FYPKLLVLVD…TSAACLKDTY (215 aa)) constitute a Peptidase M12B domain. Disulfide bonds link Cys317–Cys400 and Cys356–Cys384. His340 serves as a coordination point for Zn(2+). Glu341 is a catalytic residue. Positions 344 and 350 each coordinate Zn(2+). An N-linked (GlcNAc...) asparagine glycan is attached at Asn391.

This sequence in the C-terminal section; belongs to the venom metalloproteinase (M12B) family. In terms of assembly, monomer. It depends on Zn(2+) as a cofactor. Expressed by the venom gland.

The protein localises to the secreted. With respect to regulation, the gelatinase activity is inhibited by EDTA. The recombinant protein has gelatinase activity. In vivo, injection of this recombinant into fifth instar L.oleracea (host) larvae results in partial insect mortality associated with the molt to sixth instar, with surviving insects showing retarded development and growth. In Eulophus pennicornis (Parasitoid wasp), this protein is Venom metalloproteinase 3.